The sequence spans 185 residues: Dehydrin ERD14 (185 aa).

Basic and acidic residues-rich tracts occupy residues 1–13 (MAEE…EQEV), 25–45 (VTDR…KPEE), 52–78 (FEQK…HRSD), and 103–134 (KPTT…KPED). Disordered regions lie at residues 1 to 138 (MAEE…GSAV) and 166 to 185 (EKLP…KDKE). Ala2 carries the N-acetylalanine modification. Residue Ser59 is modified to Phosphoserine. Repeat copies occupy residues 112–132 (EEEK…HKKP) and 154–174 (PVEK…YHPK). A 2 X 21 AA repeats, Lys-rich region spans residues 112 to 174 (EEEKKGFMEK…KEKLPGYHPK (63 aa)).

Belongs to the plant dehydrin family. In stems, cauline leaves, roots and flowers. Low levels found in maturing seeds. Absent in dry seeds.

In terms of biological role, intrinsically disordered protein acting as a chaperone. Prevents heat-induced aggregation and/or inactivation of various substrates. Binds to acidic phospholipid vesicles without affecting membrane fluidity. The sequence is that of Dehydrin ERD14 (ERD14) from Arabidopsis thaliana (Mouse-ear cress).